The primary structure comprises 468 residues: 6-phosphogluconate dehydrogenase, decarboxylating (468 aa).

NADP(+)-binding positions include glycine 10 to glycine 15, asparagine 33 to serine 35, isoleucine 74 to serine 76, and asparagine 102. Residues asparagine 102 and serine 128–glycine 130 each bind substrate. Catalysis depends on lysine 182, which acts as the Proton acceptor. A substrate-binding site is contributed by histidine 185–asparagine 186. Residue glutamate 189 is the Proton donor of the active site. Substrate contacts are provided by tyrosine 190, lysine 259, arginine 286, arginine 445, and histidine 451.

The protein belongs to the 6-phosphogluconate dehydrogenase family. As to quaternary structure, homodimer.

It catalyses the reaction 6-phospho-D-gluconate + NADP(+) = D-ribulose 5-phosphate + CO2 + NADPH. The protein operates within carbohydrate degradation; pentose phosphate pathway; D-ribulose 5-phosphate from D-glucose 6-phosphate (oxidative stage): step 3/3. Catalyzes the oxidative decarboxylation of 6-phosphogluconate to ribulose 5-phosphate and CO(2), with concomitant reduction of NADP to NADPH. The polypeptide is 6-phosphogluconate dehydrogenase, decarboxylating (gnd) (Buchnera aphidicola subsp. Baizongia pistaciae (strain Bp)).